We begin with the raw amino-acid sequence, 98 residues long: NADH-ubiquinone oxidoreductase chain 4L (98 aa).

Helical transmembrane passes span 1 to 21 (MPPI…GLLM), 29 to 49 (SLLC…ILSL), and 61 to 81 (IILL…LVMI).

The protein belongs to the complex I subunit 4L family. In terms of assembly, core subunit of respiratory chain NADH dehydrogenase (Complex I) which is composed of 45 different subunits.

It is found in the mitochondrion inner membrane. It catalyses the reaction a ubiquinone + NADH + 5 H(+)(in) = a ubiquinol + NAD(+) + 4 H(+)(out). Its function is as follows. Core subunit of the mitochondrial membrane respiratory chain NADH dehydrogenase (Complex I) which catalyzes electron transfer from NADH through the respiratory chain, using ubiquinone as an electron acceptor. Part of the enzyme membrane arm which is embedded in the lipid bilayer and involved in proton translocation. The protein is NADH-ubiquinone oxidoreductase chain 4L (MT-ND4L) of Galeopterus variegatus (Malayan flying lemur).